Consider the following 45-residue polypeptide: Globin, minor monomeric component (45 aa).

A Globin domain is found at 1–45 (GLSAAERQVVASCWKDIAGADXGAGVGKEXLIKFISAAPEMAAVF).

Belongs to the globin family. Monomer.

This is Globin, minor monomeric component from Glycera dibranchiata (Bloodworm).